Consider the following 416-residue polypeptide: UDP-N-acetylglucosamine 1-carboxyvinyltransferase (416 aa).

22 to 23 is a phosphoenolpyruvate binding site; it reads KN. Arg91 is a binding site for UDP-N-acetyl-alpha-D-glucosamine. Cys115 serves as the catalytic Proton donor. Position 115 is a 2-(S-cysteinyl)pyruvic acid O-phosphothioketal (Cys115). UDP-N-acetyl-alpha-D-glucosamine-binding positions include 120–124, Asp305, and Ile327; that span reads RPIDL.

It belongs to the EPSP synthase family. MurA subfamily.

The protein localises to the cytoplasm. It carries out the reaction phosphoenolpyruvate + UDP-N-acetyl-alpha-D-glucosamine = UDP-N-acetyl-3-O-(1-carboxyvinyl)-alpha-D-glucosamine + phosphate. It participates in cell wall biogenesis; peptidoglycan biosynthesis. In terms of biological role, cell wall formation. Adds enolpyruvyl to UDP-N-acetylglucosamine. The protein is UDP-N-acetylglucosamine 1-carboxyvinyltransferase of Buchnera aphidicola subsp. Acyrthosiphon pisum (strain 5A).